Consider the following 358-residue polypeptide: Heme A synthase (358 aa).

8 helical membrane-spanning segments follow: residues 22–42 (IQVW…VGGA), 107–127 (VLGR…WAIK), 133–153 (VLLQ…VGWW), 172–192 (LAFH…LSQG), 208–228 (FAGW…LVAG), 269–289 (FVHR…AFYV), 302–322 (AFFI…TLLQ), and 324–344 (VPIS…CFSV). His271 serves as a coordination point for heme. His332 lines the heme pocket.

This sequence belongs to the COX15/CtaA family. Type 2 subfamily. In terms of assembly, interacts with CtaB. Heme b is required as a cofactor.

It localises to the cell membrane. It carries out the reaction Fe(II)-heme o + 2 A + H2O = Fe(II)-heme a + 2 AH2. Its pathway is porphyrin-containing compound metabolism; heme A biosynthesis; heme A from heme O: step 1/1. In terms of biological role, catalyzes the conversion of heme O to heme A by two successive hydroxylations of the methyl group at C8. The first hydroxylation forms heme I, the second hydroxylation results in an unstable dihydroxymethyl group, which spontaneously dehydrates, resulting in the formyl group of heme A. This is Heme A synthase from Bartonella henselae (strain ATCC 49882 / DSM 28221 / CCUG 30454 / Houston 1) (Rochalimaea henselae).